Consider the following 156-residue polypeptide: Ribosomal RNA large subunit methyltransferase H (156 aa).

S-adenosyl-L-methionine contacts are provided by residues L73, G104, and 123–128 (LSDLTL).

Belongs to the RNA methyltransferase RlmH family. As to quaternary structure, homodimer.

The protein localises to the cytoplasm. The catalysed reaction is pseudouridine(1915) in 23S rRNA + S-adenosyl-L-methionine = N(3)-methylpseudouridine(1915) in 23S rRNA + S-adenosyl-L-homocysteine + H(+). Its function is as follows. Specifically methylates the pseudouridine at position 1915 (m3Psi1915) in 23S rRNA. This Methylibium petroleiphilum (strain ATCC BAA-1232 / LMG 22953 / PM1) protein is Ribosomal RNA large subunit methyltransferase H.